The sequence spans 43 residues: Photosystem II reaction center protein K (43 aa).

The propeptide occupies 1–6; that stretch reads MSLLLA. Residues 18–38 form a helical membrane-spanning segment; the sequence is IVDVLPIIPVLFLLLAFVWQA.

It belongs to the PsbK family. In terms of assembly, PSII is composed of 1 copy each of membrane proteins PsbA, PsbB, PsbC, PsbD, PsbE, PsbF, PsbH, PsbI, PsbJ, PsbK, PsbL, PsbM, PsbT, PsbX, PsbY, PsbZ, Psb30/Ycf12, at least 3 peripheral proteins of the oxygen-evolving complex and a large number of cofactors. It forms dimeric complexes.

It is found in the plastid. The protein localises to the chloroplast thylakoid membrane. One of the components of the core complex of photosystem II (PSII). PSII is a light-driven water:plastoquinone oxidoreductase that uses light energy to abstract electrons from H(2)O, generating O(2) and a proton gradient subsequently used for ATP formation. It consists of a core antenna complex that captures photons, and an electron transfer chain that converts photonic excitation into a charge separation. This is Photosystem II reaction center protein K from Oltmannsiellopsis viridis (Marine flagellate).